We begin with the raw amino-acid sequence, 510 residues long: 2,3-bisphosphoglycerate-independent phosphoglycerate mutase (510 aa).

Mn(2+) is bound by residues aspartate 14 and serine 64. Serine 64 acts as the Phosphoserine intermediate in catalysis. Substrate is bound by residues histidine 125, 155-156, arginine 187, arginine 193, 259-262, and lysine 332; these read RD and RADR. Positions 399, 403, 440, 441, and 459 each coordinate Mn(2+).

This sequence belongs to the BPG-independent phosphoglycerate mutase family. Monomer. The cofactor is Mn(2+).

It carries out the reaction (2R)-2-phosphoglycerate = (2R)-3-phosphoglycerate. Its pathway is carbohydrate degradation; glycolysis; pyruvate from D-glyceraldehyde 3-phosphate: step 3/5. Functionally, catalyzes the interconversion of 2-phosphoglycerate and 3-phosphoglycerate. Essential for the growth and pathogenicity on the host plant. This Pseudomonas syringae pv. tomato (strain ATCC BAA-871 / DC3000) protein is 2,3-bisphosphoglycerate-independent phosphoglycerate mutase.